The following is a 933-amino-acid chain: DNA repair-scaffolding protein (933 aa).

3 disordered regions span residues 1–34 (MSGA…LRRG), 67–174 (SEKT…KGTL), and 205–224 (YSSD…IDSE). Basic and acidic residues-rich tracts occupy residues 16-29 (WHIE…ERSQ), 71-87 (GITE…KTET), and 119-132 (RDGR…RLGD). A compositionally biased stretch (acidic residues) spans 138–148 (PEDEDIEDELQ). Residues 175–469 (DISDCDSCAS…GTGWTHGHEK (295 aa)) are necessary for interaction with RAD51. Residues 214-224 (DPEHSLFIDSE) are compositionally biased toward basic and acidic residues.

In terms of assembly, found in a complex, at least composed of BLM, RAD51 and SPIDR; the complex formation is mediated by SPIDR. Interacts (via C-terminal region) with BLM; the interaction is direct. Interacts with RAD51; the interaction is direct. Interacts (via the C-terminal region) with FIGNL1 (via N-terminal one-half region); the interaction is direct.

It is found in the nucleus. Its function is as follows. Plays a role in DNA double-strand break (DBS) repair via homologous recombination (HR). Serves as a scaffolding protein that helps to promote the recruitment of DNA-processing enzymes like the helicase BLM and recombinase RAD51 to site of DNA damage, and hence contributes to maintain genomic integrity. The chain is DNA repair-scaffolding protein (Spidr) from Mus musculus (Mouse).